The sequence spans 458 residues: Glutamate--tRNA ligase 2 (458 aa).

The short motif at 20-30 is the 'HIGH' region element; the sequence is PSPTGLIHVGN. The short motif at 251-255 is the 'KMSKS' region element; it reads GLSKR. ATP is bound at residue K254.

The protein belongs to the class-I aminoacyl-tRNA synthetase family. Glutamate--tRNA ligase type 1 subfamily. As to quaternary structure, monomer.

It is found in the cytoplasm. It carries out the reaction tRNA(Glu) + L-glutamate + ATP = L-glutamyl-tRNA(Glu) + AMP + diphosphate. In terms of biological role, catalyzes the attachment of glutamate to tRNA(Glu) in a two-step reaction: glutamate is first activated by ATP to form Glu-AMP and then transferred to the acceptor end of tRNA(Glu). In Xanthobacter autotrophicus (strain ATCC BAA-1158 / Py2), this protein is Glutamate--tRNA ligase 2.